Reading from the N-terminus, the 465-residue chain is Cysteine--tRNA ligase (465 aa).

Cys27 serves as a coordination point for Zn(2+). A 'HIGH' region motif is present at residues 29–39 (PTVYNYIHIGN). Zn(2+)-binding residues include Cys207, His232, and Glu236. The short motif at 264 to 268 (KMSKS) is the 'KMSKS' region element. Lys267 contributes to the ATP binding site.

Belongs to the class-I aminoacyl-tRNA synthetase family. In terms of assembly, monomer. It depends on Zn(2+) as a cofactor.

Its subcellular location is the cytoplasm. The enzyme catalyses tRNA(Cys) + L-cysteine + ATP = L-cysteinyl-tRNA(Cys) + AMP + diphosphate. In Clostridioides difficile (strain 630) (Peptoclostridium difficile), this protein is Cysteine--tRNA ligase.